Reading from the N-terminus, the 95-residue chain is ESAT-6-like protein EsxC (95 aa).

The protein belongs to the WXG100 family. ESAT-6 subfamily.

The protein resides in the secreted. The chain is ESAT-6-like protein EsxC from Mycolicibacterium paratuberculosis (strain ATCC BAA-968 / K-10) (Mycobacterium paratuberculosis).